A 218-amino-acid polypeptide reads, in one-letter code: 3-dehydroquinate dehydratase (218 aa).

3-dehydroquinate-binding positions include 29 to 31 and arginine 56; that span reads EFR. The active-site Proton donor/acceptor is histidine 116. Lysine 142 serves as the catalytic Schiff-base intermediate with substrate. 3-dehydroquinate is bound by residues arginine 180, serine 200, and glutamine 204.

It belongs to the type-I 3-dehydroquinase family. In terms of assembly, homodimer.

It carries out the reaction 3-dehydroquinate = 3-dehydroshikimate + H2O. The protein operates within metabolic intermediate biosynthesis; chorismate biosynthesis; chorismate from D-erythrose 4-phosphate and phosphoenolpyruvate: step 3/7. In terms of biological role, involved in the third step of the chorismate pathway, which leads to the biosynthesis of aromatic amino acids. Catalyzes the cis-dehydration of 3-dehydroquinate (DHQ) and introduces the first double bond of the aromatic ring to yield 3-dehydroshikimate. In Methanococcus vannielii (strain ATCC 35089 / DSM 1224 / JCM 13029 / OCM 148 / SB), this protein is 3-dehydroquinate dehydratase.